The following is a 300-amino-acid chain: Protease HtpX homolog (300 aa).

Helical transmembrane passes span 7-24 (GILM…GALI) and 29-46 (GAII…FTFW). His130 contributes to the Zn(2+) binding site. Glu131 is a catalytic residue. Zn(2+) is bound at residue His134. Transmembrane regions (helical) follow at residues 145-165 (VTAT…FFGG) and 174-194 (PMGL…AGLV). Glu203 lines the Zn(2+) pocket.

The protein belongs to the peptidase M48B family. Zn(2+) serves as cofactor.

Its subcellular location is the cell inner membrane. The protein is Protease HtpX homolog of Cereibacter sphaeroides (strain ATCC 17029 / ATH 2.4.9) (Rhodobacter sphaeroides).